Here is a 497-residue protein sequence, read N- to C-terminus: ATP synthase subunit alpha, chloroplastic (497 aa).

170–177 is a binding site for ATP; the sequence is GDRQTGKT.

It belongs to the ATPase alpha/beta chains family. F-type ATPases have 2 components, CF(1) - the catalytic core - and CF(0) - the membrane proton channel. CF(1) has five subunits: alpha(3), beta(3), gamma(1), delta(1), epsilon(1). CF(0) has four main subunits: a, b, b' and c.

The protein localises to the plastid. The protein resides in the chloroplast thylakoid membrane. It carries out the reaction ATP + H2O + 4 H(+)(in) = ADP + phosphate + 5 H(+)(out). Produces ATP from ADP in the presence of a proton gradient across the membrane. The alpha chain is a regulatory subunit. The protein is ATP synthase subunit alpha, chloroplastic of Bigelowiella natans (Pedinomonas minutissima).